The following is a 178-amino-acid chain: ATP synthase subunit delta (178 aa).

Belongs to the ATPase delta chain family. F-type ATPases have 2 components, F(1) - the catalytic core - and F(0) - the membrane proton channel. F(1) has five subunits: alpha(3), beta(3), gamma(1), delta(1), epsilon(1). F(0) has three main subunits: a(1), b(2) and c(10-14). The alpha and beta chains form an alternating ring which encloses part of the gamma chain. F(1) is attached to F(0) by a central stalk formed by the gamma and epsilon chains, while a peripheral stalk is formed by the delta and b chains.

Its subcellular location is the cell inner membrane. Its function is as follows. F(1)F(0) ATP synthase produces ATP from ADP in the presence of a proton or sodium gradient. F-type ATPases consist of two structural domains, F(1) containing the extramembraneous catalytic core and F(0) containing the membrane proton channel, linked together by a central stalk and a peripheral stalk. During catalysis, ATP synthesis in the catalytic domain of F(1) is coupled via a rotary mechanism of the central stalk subunits to proton translocation. Functionally, this protein is part of the stalk that links CF(0) to CF(1). It either transmits conformational changes from CF(0) to CF(1) or is implicated in proton conduction. The sequence is that of ATP synthase subunit delta from Pelodictyon phaeoclathratiforme (strain DSM 5477 / BU-1).